The chain runs to 867 residues: Cadherin-related family member 1 (867 aa).

The first 21 residues, 1 to 21 (MKHEWNLCPSIFFSIFHICLS), serve as a signal peptide directing secretion. The Extracellular portion of the chain corresponds to 22-707 (VQTNYGPYFF…SKDNPMKALG (686 aa)). Cadherin domains are found at residues 39–138 (NGNM…SPGF), 139–250 (LNTP…PPVF), 251–357 (VGTP…PPTF), 363–476 (PQNR…VPRF), 477–580 (SSEY…SPEF), and 572–692 (DIND…GPMA). Residues 708-728 (VLAGVMAIMVVITIFISTAMF) traverse the membrane as a helical segment. The Cytoplasmic portion of the chain corresponds to 729-867 (WRNKKSNRVM…KNAGSSMSFY (139 aa)). Residues 777–825 (EMESGPKNENRNNNYQGIPVPPRAPCPPPPPRLMPKVSKTERSLPTVSG) are disordered. Residues 795–809 (PVPPRAPCPPPPPRL) show a composition bias toward pro residues.

In terms of tissue distribution, expressed in photoreceptor cells of the outer nuclear layer of the retina and in the pinal gland.

The protein resides in the membrane. Potential calcium-dependent cell-adhesion protein. This is Cadherin-related family member 1 (cdhr1) from Xenopus laevis (African clawed frog).